The primary structure comprises 199 residues: Ribonuclease HII (199 aa).

The region spanning 14-199 is the RNase H type-2 domain; that stretch reads GLLAGVDEAG…SFAPVAEVLR (186 aa). The a divalent metal cation site is built by D20, E21, and D112.

The protein belongs to the RNase HII family. Requires Mn(2+) as cofactor. The cofactor is Mg(2+).

It localises to the cytoplasm. It carries out the reaction Endonucleolytic cleavage to 5'-phosphomonoester.. In terms of biological role, endonuclease that specifically degrades the RNA of RNA-DNA hybrids. This chain is Ribonuclease HII, found in Polaromonas sp. (strain JS666 / ATCC BAA-500).